A 621-amino-acid polypeptide reads, in one-letter code: Probable bifunctional dTTP/UTP pyrophosphatase/methyltransferase protein (621 aa).

The interval 11-223 (LHKRVVLASA…PPRPEDLRRS (213 aa)) is MAF-like. S21 carries the post-translational modification Phosphoserine. Catalysis depends on D88, which acts as the Proton acceptor; for pyrophosphatase activity. S228 bears the Phosphoserine mark. The residue at position 234 (T234) is a Phosphothreonine. Residues 235-279 (FEDLSDVEGGGSEPTQRDAGSRDEKAEAGEAGQATAEAECHRTRE) are disordered. S239 bears the Phosphoserine mark. Positions 249-262 (TQRDAGSRDEKAEA) are enriched in basic and acidic residues. Positions 277 to 621 (TRETLPPFPT…DAILATKVAP (345 aa)) are ASMT-like. A Phosphoserine modification is found at S421. Residues D482, 508-510 (GDF), and R525 each bind S-adenosyl-L-methionine.

The protein in the N-terminal section; belongs to the Maf family. YhdE subfamily. It in the C-terminal section; belongs to the class I-like SAM-binding methyltransferase superfamily. Cation-independent O-methyltransferase family. As to quaternary structure, homodimer. A divalent metal cation serves as cofactor. In terms of tissue distribution, widely expressed. In adult, highly expressed in pancreas, placenta, fibroblast, thymus, prostate, testis, ovary and colon. Expressed at lower levels in spleen, small intestine and leukocytes. In fetus, expressed at high levels in the lung and kidney and at lower level in brain and liver.

The enzyme catalyses dTTP + H2O = dTMP + diphosphate + H(+). It catalyses the reaction UTP + H2O = UMP + diphosphate + H(+). The catalysed reaction is CTP + H2O = CMP + diphosphate + H(+). It carries out the reaction psi-UTP + H2O = psi-UMP + diphosphate + H(+). The enzyme catalyses 5-methyl-UTP + H2O = 5-methyl-UMP + diphosphate + H(+). It catalyses the reaction 5-methyl-CTP + H2O = 5-methyl-CMP + diphosphate + H(+). Functionally, nucleoside triphosphate pyrophosphatase that hydrolyzes dTTP and UTP. Can also hydrolyze CTP and the modified nucleotides pseudo-UTP, 5-methyl-UTP (m(5)UTP) and 5-methyl-CTP (m(5)CTP). Has weak activity with dCTP, 8-oxo-GTP and N(4)-methyl-dCTP. May have a dual role in cell division arrest and in preventing the incorporation of modified nucleotides into cellular nucleic acids. In addition, the presence of the putative catalytic domain of S-adenosyl-L-methionine binding in the C-terminal region argues for a methyltransferase activity. The chain is Probable bifunctional dTTP/UTP pyrophosphatase/methyltransferase protein (ASMTL) from Homo sapiens (Human).